A 301-amino-acid polypeptide reads, in one-letter code: GTPase Era (301 aa).

The region spanning 7–175 is the Era-type G domain; the sequence is YCGFIAIVGR…AAIVRKHLPE (169 aa). Positions 15 to 22 are G1; sequence GRPNVGKS. 15–22 is a binding site for GTP; sequence GRPNVGKS. Residues 41–45 form a G2 region; it reads QTTRH. The segment at 62–65 is G3; that stretch reads DTPG. GTP is bound by residues 62–66 and 124–127; these read DTPGL and NKVD. Residues 124 to 127 are G4; that stretch reads NKVD. A G5 region spans residues 154 to 156; that stretch reads ISA. One can recognise a KH type-2 domain in the interval 206 to 283; sequence LGAELPYSVT…HLELWVKVKS (78 aa).

The protein belongs to the TRAFAC class TrmE-Era-EngA-EngB-Septin-like GTPase superfamily. Era GTPase family. Monomer.

Its subcellular location is the cytoplasm. The protein resides in the cell inner membrane. Its function is as follows. An essential GTPase that binds both GDP and GTP, with rapid nucleotide exchange. Plays a role in 16S rRNA processing and 30S ribosomal subunit biogenesis and possibly also in cell cycle regulation and energy metabolism. The polypeptide is GTPase Era (Escherichia coli O1:K1 / APEC).